A 347-amino-acid polypeptide reads, in one-letter code: Bifunctional methylenetetrahydrofolate dehydrogenase/cyclohydrolase 2, mitochondrial (347 aa).

Residues 98–102 (YVRNK) and 145–147 (VQL) contribute to the substrate site. NAD(+) is bound by residues 214–216 (GRS) and arginine 247. 323 to 327 (PGGVG) is a substrate binding site.

Belongs to the tetrahydrofolate dehydrogenase/cyclohydrolase family. It depends on Mg(2+) as a cofactor. As to expression, isoform 1, isoform 4 and isoform 5 are expressed in brain and placenta.

It localises to the mitochondrion inner membrane. It catalyses the reaction (6R)-5,10-methylene-5,6,7,8-tetrahydrofolate + NAD(+) = (6R)-5,10-methenyltetrahydrofolate + NADH. The catalysed reaction is (6R)-5,10-methenyltetrahydrofolate + H2O = (6R)-10-formyltetrahydrofolate + H(+). The enzyme catalyses (6R)-5,10-methylene-5,6,7,8-tetrahydrofolate + NADP(+) = (6R)-5,10-methenyltetrahydrofolate + NADPH. It functions in the pathway one-carbon metabolism; tetrahydrofolate interconversion. Functionally, bifunctional mitochondrial folate-interconverting enzyme that has both NAD/NADP-dependent methylenetetrahydrofolate dehydrogenase and methenyltetrahydrofolate cyclohydrolase activities. The protein is Bifunctional methylenetetrahydrofolate dehydrogenase/cyclohydrolase 2, mitochondrial of Homo sapiens (Human).